The sequence spans 611 residues: Histone acetyltransferase KAT7 (611 aa).

Residues 1 to 173 are disordered; that stretch reads MPRRKRNAGS…SDLSHRPKRR (173 aa). A Phosphoserine modification is found at Ser10. Low complexity predominate over residues 42-57; sequence VTRSSARLSQSSQDSS. Residues Ser50 and Ser53 each carry the phosphoserine; by ATR modification. The residue at position 57 (Ser57) is a Phosphoserine; by PLK1. Position 64 is a phosphoserine (Ser64). Thr85 and Thr88 each carry phosphothreonine; by CDK1. Residues 96 to 105 show a composition bias toward polar residues; sequence QTRSSGSETE. Ser102 carries the post-translational modification Phosphoserine. Thr104 is subject to Phosphothreonine. Residues 110-125 are compositionally biased toward basic and acidic residues; that stretch reads FSDRETKNTADHDESP. Phosphoserine occurs at positions 111 and 124. Thr128 carries the post-translational modification Phosphothreonine. Low complexity predominate over residues 134–145; sequence PSSESDIDISSP. A compositionally biased stretch (basic and acidic residues) spans 148–168; the sequence is SHDESIAKDMSLKDSGSDLSH. 4 positions are modified to phosphoserine: Ser158, Ser162, Ser164, and Ser178. The CCHHC-type zinc-finger motif lies at 176–219; sequence HESYNFNMKCPTPGCNSLGHLTGKHERHFSISGCPLYHNLSADE. Residues Lys199 and Lys277 each carry the N6-acetyllysine modification. Residue Lys323 forms a Glycyl lysine isopeptide (Lys-Gly) (interchain with G-Cter in SUMO2) linkage. The 276-residue stretch at 332–607 folds into the MYST-type HAT domain; sequence EGSNMIKTIA…MDPSCLKWTP (276 aa). Lys338 participates in a covalent cross-link: Glycyl lysine isopeptide (Lys-Gly) (interchain with G-Cter in ubiquitin). The C2HC MYST-type zinc finger occupies 365–390; sequence LYMCEFCLKYMKSQTILRRHMAKCVW. Zn(2+)-binding residues include Cys368, Cys371, His384, and Cys388. Lys432 is modified (N6-acetyllysine; by autocatalysis). Acetyl-CoA contacts are provided by residues 475-477 and 483-488; these read ILT and RQGYGK. Ser506 carries the phosphoserine modification. Glu508 functions as the Proton donor/acceptor in the catalytic mechanism. 2 residues coordinate acetyl-CoA: Ser512 and Ser521.

The protein belongs to the MYST (SAS/MOZ) family. As to quaternary structure, component of the HBO1 complex composed of KAT7/HBO1, MEAF6, ING4 or ING5, and one scaffold subunit: complexes containing BRPF scaffold (BRPF1, BRD1/BRPF2 or BRPF3) direct KAT7/HBO1 specificity towards H3K14ac, while complexes containing JADE scaffold (JADE1, JADE2 and JADE3) mediate acetylation of histone H4. Interacts with MCM2 and ORC1. Interacts with the androgen receptor (AR); in the presence of dihydrotestosterone. Interacts with CDT1. Interacts with MAP2K1 and CUL1. Interacts with p53/TP53; leading to inhibit histone acetyltransferase activity. Interacts with MIS18BP1. In terms of processing, phosphorylated at Ser-50 and Ser-53 by ATR in response to DNA damage, promoting its ubiquitination by the CRL4(DDB2) complex and subsequent degradation. Phosphorylation at Ser-50 and Ser-53 by ATR in response to ultraviolet-induced DNA, promotes localization to DNA damage sites. Phosphorylation at Ser-57 by PLK1 during mitosis seems important for prereplicative complex formation and DNA replication licensing, and requires prior phosphorylation at Thr-85 and Thr-88 by CDK1. Phosphorylated by MAP2K1, which accelerates its degradation. Ubiquitinated at Lys-338, leading to proteasomal degradation. Ubiquitinated by the CRL4(DDB2) complex following phosphorylation by ATR, leading to its subsequent degradation. Post-translationally, autoacetylation at Lys-432 is required for proper function. As to expression, ubiquitously expressed, with highest levels in testis.

The protein resides in the nucleus. The protein localises to the chromosome. Its subcellular location is the centromere. It localises to the cytoplasm. It is found in the cytosol. The enzyme catalyses L-lysyl-[histone] + acetyl-CoA = N(6)-acetyl-L-lysyl-[histone] + CoA + H(+). With respect to regulation, histone acetyltransferase activity is inhibited by GMNN in the context of a complex with CDT1, inhibiting histone H4 acetylation and DNA replication licensing. Selectively inhibited by WM-3835 (N'-(4-fluoro-5-methyl-[1,1'-biphenyl]-3-carbonyl)-3- hydroxybenzenesulfonohydrazide) inhibitor. Catalytic subunit of histone acetyltransferase HBO1 complexes, which specifically mediate acetylation of histone H3 at 'Lys-14' (H3K14ac), thereby regulating various processes, such as gene transcription, protein ubiquitination, immune regulation, stem cell pluripotent and self-renewal maintenance and embryonic development. Some complexes also catalyze acetylation of histone H4 at 'Lys-5', 'Lys-8' and 'Lys-12' (H4K5ac, H4K8ac and H4K12ac, respectively), regulating DNA replication initiation, regulating DNA replication initiation. Specificity of the HBO1 complexes is determined by the scaffold subunit: complexes containing BRPF scaffold (BRPF1, BRD1/BRPF2 or BRPF3) direct KAT7/HBO1 specificity towards H3K14ac, while complexes containing JADE (JADE1, JADE2 and JADE3) scaffold direct KAT7/HBO1 specificity towards histone H4. H3K14ac promotes transcriptional elongation by facilitating the processivity of RNA polymerase II. Acts as a key regulator of hematopoiesis by forming a complex with BRD1/BRPF2, directing KAT7/HBO1 specificity towards H3K14ac and promoting erythroid differentiation. H3K14ac is also required for T-cell development. KAT7/HBO1-mediated acetylation facilitates two consecutive steps, licensing and activation, in DNA replication initiation: H3K14ac facilitates the activation of replication origins, and histone H4 acetylation (H4K5ac, H4K8ac and H4K12ac) facilitates chromatin loading of MCM complexes, promoting DNA replication licensing. Acts as a positive regulator of centromeric CENPA assembly: recruited to centromeres and mediates histone acetylation, thereby preventing centromere inactivation mediated by SUV39H1, possibly by increasing histone turnover/exchange. Involved in nucleotide excision repair: phosphorylation by ATR in response to ultraviolet irradiation promotes its localization to DNA damage sites, where it mediates histone acetylation to facilitate recruitment of XPC at the damaged DNA sites. Acts as an inhibitor of NF-kappa-B independently of its histone acetyltransferase activity. Its function is as follows. Plays a central role in the maintenance of leukemia stem cells in acute myeloid leukemia (AML). Acts by mediating acetylation of histone H3 at 'Lys-14' (H3K14ac), thereby facilitating the processivity of RNA polymerase II to maintain the high expression of key genes, such as HOXA9 and HOXA10 that help to sustain the functional properties of leukemia stem cells. The chain is Histone acetyltransferase KAT7 from Homo sapiens (Human).